A 1365-amino-acid polypeptide reads, in one-letter code: DNA-directed RNA polymerase subunit beta' (1365 aa).

Residues Cys249, Cys316, Cys323, and Cys326 each contribute to the Zn(2+) site.

Belongs to the RNA polymerase beta' chain family. RpoC2 subfamily. In cyanobacteria the RNAP catalytic core is composed of 2 alpha, 1 beta, 1 beta', 1 gamma and 1 omega subunit. When a sigma factor is associated with the core the holoenzyme is formed, which can initiate transcription. It depends on Zn(2+) as a cofactor.

The enzyme catalyses RNA(n) + a ribonucleoside 5'-triphosphate = RNA(n+1) + diphosphate. In terms of biological role, DNA-dependent RNA polymerase catalyzes the transcription of DNA into RNA using the four ribonucleoside triphosphates as substrates. The sequence is that of DNA-directed RNA polymerase subunit beta' from Synechococcus sp. (strain CC9311).